We begin with the raw amino-acid sequence, 233 residues long: Orotidine 5'-phosphate decarboxylase (233 aa).

Substrate contacts are provided by residues aspartate 13, lysine 35, 62-71 (DLKFHDIPNT), threonine 122, arginine 182, glutamine 191, glycine 211, and arginine 212. Catalysis depends on lysine 64, which acts as the Proton donor.

Belongs to the OMP decarboxylase family. Type 1 subfamily. In terms of assembly, homodimer.

It catalyses the reaction orotidine 5'-phosphate + H(+) = UMP + CO2. Its pathway is pyrimidine metabolism; UMP biosynthesis via de novo pathway; UMP from orotate: step 2/2. In terms of biological role, catalyzes the decarboxylation of orotidine 5'-monophosphate (OMP) to uridine 5'-monophosphate (UMP). This Pseudomonas fluorescens (strain ATCC BAA-477 / NRRL B-23932 / Pf-5) protein is Orotidine 5'-phosphate decarboxylase.